Consider the following 35-residue polypeptide: Kappa-theraphotoxin-Gr1b (35 aa).

Cystine bridges form between C2–C16, C9–C21, and C15–C28. An involved in active face region spans residues 4–6; that stretch reads YLF.

It belongs to the neurotoxin 10 (Hwtx-1) family. 09 (HaTx) subfamily. In terms of tissue distribution, expressed by the venom gland.

The protein resides in the secreted. Functionally, inhibitor of voltage-gated potassium channels. Inhibits Kv2.1/KCNB1 channels, by shifting activation of the channel to more depolarized voltages. The toxin binding sites may be situated on the S3-S4 extracellular linker of the channel. One, two, three or four toxin molecules may bind the Kv2.1/KCNB1 channel. May need to partition into the membrane in order to bind to the channel. Antibacterial activity is not observed. This is Kappa-theraphotoxin-Gr1b from Grammostola rosea (Chilean rose tarantula).